Reading from the N-terminus, the 96-residue chain is MSIKLINIGFGNIISANRLVAIVSPESAPIKRIIQEAKNRGMLIDATYGRRTRAVIITDSDHIILSAVQPETVANRLNSNKEILEDTLEEDEEEEE.

This sequence belongs to the RemA family.

This is Putative regulatory protein Teth514_1762 from Thermoanaerobacter sp. (strain X514).